The following is a 91-amino-acid chain: PqqA binding protein 1 (91 aa).

Belongs to the PqqD family. As to quaternary structure, monomer. Interacts with PqqE.

It participates in cofactor biosynthesis; pyrroloquinoline quinone biosynthesis. Functionally, functions as a PqqA binding protein and presents PqqA to PqqE, in the pyrroloquinoline quinone (PQQ) biosynthetic pathway. This is PqqA binding protein 1 (pqqD1) from Pseudomonas putida (strain ATCC 47054 / DSM 6125 / CFBP 8728 / NCIMB 11950 / KT2440).